The sequence spans 100 residues: Urease subunit gamma (100 aa).

It belongs to the urease gamma subunit family. In terms of assembly, heterotrimer of UreA (gamma), UreB (beta) and UreC (alpha) subunits. Three heterotrimers associate to form the active enzyme.

It is found in the cytoplasm. The enzyme catalyses urea + 2 H2O + H(+) = hydrogencarbonate + 2 NH4(+). Its pathway is nitrogen metabolism; urea degradation; CO(2) and NH(3) from urea (urease route): step 1/1. This chain is Urease subunit gamma, found in Picosynechococcus sp. (strain ATCC 27264 / PCC 7002 / PR-6) (Agmenellum quadruplicatum).